The primary structure comprises 583 residues: Thiol:disulfide interchange protein DsbD (583 aa).

An N-terminal signal peptide occupies residues 1–20; the sequence is MLKRFIFLLVGITLTLSAHA. 2 disulfide bridges follow: Cys123–Cys128 and Cys200–Cys322. The next 8 helical transmembrane spans lie at 185–205, 237–257, 261–281, 302–322, 344–364, 375–395, 405–425, and 433–453; these read IFWF…LPML, LTYT…QVAL, PVLI…FGLF, GGAF…ASPC, GLAL…ITLF, WLLK…VFLL, PLMW…VIPT, and VRIV…NLVW. Residues 440–583 form the Thioredoxin domain; that stretch reads TFAVASYPWA…NQFLNWLNQL (144 aa). A disulfide bridge connects residues Cys500 and Cys503.

It belongs to the thioredoxin family. DsbD subfamily.

Its subcellular location is the cell inner membrane. It carries out the reaction [protein]-dithiol + NAD(+) = [protein]-disulfide + NADH + H(+). The catalysed reaction is [protein]-dithiol + NADP(+) = [protein]-disulfide + NADPH + H(+). Its function is as follows. Required to facilitate the formation of correct disulfide bonds in some periplasmic proteins and for the assembly of the periplasmic c-type cytochromes. Acts by transferring electrons from cytoplasmic thioredoxin to the periplasm. This transfer involves a cascade of disulfide bond formation and reduction steps. In Actinobacillus pleuropneumoniae serotype 5b (strain L20), this protein is Thiol:disulfide interchange protein DsbD.